A 191-amino-acid chain; its full sequence is Elongation factor P (191 aa).

The protein belongs to the elongation factor P family.

Its subcellular location is the cytoplasm. It functions in the pathway protein biosynthesis; polypeptide chain elongation. Functionally, involved in peptide bond synthesis. Stimulates efficient translation and peptide-bond synthesis on native or reconstituted 70S ribosomes in vitro. Probably functions indirectly by altering the affinity of the ribosome for aminoacyl-tRNA, thus increasing their reactivity as acceptors for peptidyl transferase. In Ralstonia pickettii (strain 12J), this protein is Elongation factor P.